Reading from the N-terminus, the 572-residue chain is Urease subunit alpha (572 aa).

Residues 134 to 572 (GGIDSHIHFI…LPLAQRYFLF (439 aa)) enclose the Urease domain. Ni(2+) is bound by residues H139, H141, and K222. K222 is subject to N6-carboxylysine. H224 contacts substrate. Ni(2+)-binding residues include H251 and H277. H325 acts as the Proton donor in catalysis. A Ni(2+)-binding site is contributed by D365.

This sequence belongs to the metallo-dependent hydrolases superfamily. Urease alpha subunit family. In terms of assembly, heterotrimer of UreA (gamma), UreB (beta) and UreC (alpha) subunits. Three heterotrimers associate to form the active enzyme. Requires Ni cation as cofactor. Post-translationally, carboxylation allows a single lysine to coordinate two nickel ions.

The protein localises to the cytoplasm. It catalyses the reaction urea + 2 H2O + H(+) = hydrogencarbonate + 2 NH4(+). It functions in the pathway nitrogen metabolism; urea degradation; CO(2) and NH(3) from urea (urease route): step 1/1. This Paracidovorax citrulli (strain AAC00-1) (Acidovorax citrulli) protein is Urease subunit alpha.